The sequence spans 363 residues: uncharacterized protein (363 aa).

Positions 1–20 are cleaved as a signal peptide; that stretch reads MKRAPLITGLLLISTSCAYA.

It belongs to the fimbrial protein family.

It is found in the fimbrium. Its function is as follows. Part of the yraHIJK fimbrial operon. Could contribute to adhesion to various surfaces in specific environmental niches. Increases adhesion to eukaryotic T24 bladder epithelial cells in the absence of fim operon. This is an uncharacterized protein from Escherichia coli (strain K12).